A 316-amino-acid chain; its full sequence is HPr kinase/phosphorylase (316 aa).

Residues H146 and K167 contribute to the active site. Residue 161-168 participates in ATP binding; it reads GESGLGKS. Mg(2+) is bound at residue S168. The active-site Proton acceptor; for phosphorylation activity. Proton donor; for dephosphorylation activity is D185. Residues 209–218 are important for the catalytic mechanism of both phosphorylation and dephosphorylation; that stretch reads LEVRGIGLLD. Residue E210 participates in Mg(2+) binding. R252 is an active-site residue. The segment at 273-278 is important for the catalytic mechanism of dephosphorylation; it reads QVEAGR.

This sequence belongs to the HPrK/P family. In terms of assembly, homohexamer. Mg(2+) serves as cofactor.

The enzyme catalyses [HPr protein]-L-serine + ATP = [HPr protein]-O-phospho-L-serine + ADP + H(+). The catalysed reaction is [HPr protein]-O-phospho-L-serine + phosphate + H(+) = [HPr protein]-L-serine + diphosphate. Its function is as follows. Catalyzes the ATP- as well as the pyrophosphate-dependent phosphorylation of a specific serine residue in HPr, a phosphocarrier protein of the phosphoenolpyruvate-dependent sugar phosphotransferase system (PTS). HprK/P also catalyzes the pyrophosphate-producing, inorganic phosphate-dependent dephosphorylation (phosphorolysis) of seryl-phosphorylated HPr (P-Ser-HPr). The protein is HPr kinase/phosphorylase of Polaromonas naphthalenivorans (strain CJ2).